A 137-amino-acid polypeptide reads, in one-letter code: 6,7-dimethyl-8-ribityllumazine synthase (137 aa).

Residues Phe11, 43–45 (SFD), and 67–69 (CVI) each bind 5-amino-6-(D-ribitylamino)uracil. (2S)-2-hydroxy-3-oxobutyl phosphate is bound at residue 72–73 (DT). His75 (proton donor) is an active-site residue. Position 100 (Leu100) interacts with 5-amino-6-(D-ribitylamino)uracil. Arg115 serves as a coordination point for (2S)-2-hydroxy-3-oxobutyl phosphate.

This sequence belongs to the DMRL synthase family. In terms of assembly, forms an icosahedral capsid composed of 60 subunits, arranged as a dodecamer of pentamers.

It carries out the reaction (2S)-2-hydroxy-3-oxobutyl phosphate + 5-amino-6-(D-ribitylamino)uracil = 6,7-dimethyl-8-(1-D-ribityl)lumazine + phosphate + 2 H2O + H(+). Its pathway is cofactor biosynthesis; riboflavin biosynthesis; riboflavin from 2-hydroxy-3-oxobutyl phosphate and 5-amino-6-(D-ribitylamino)uracil: step 1/2. Its function is as follows. Catalyzes the formation of 6,7-dimethyl-8-ribityllumazine by condensation of 5-amino-6-(D-ribitylamino)uracil with 3,4-dihydroxy-2-butanone 4-phosphate. This is the penultimate step in the biosynthesis of riboflavin. The sequence is that of 6,7-dimethyl-8-ribityllumazine synthase from Methanococcus maripaludis (strain DSM 14266 / JCM 13030 / NBRC 101832 / S2 / LL).